The primary structure comprises 54 residues: MAVQKSKPTRSKRGMRRSHDSLKEITLSKDKFSGEMHIRHHITAKGYYRGKKVI.

Residues methionine 1–glutamate 24 form a disordered region. A compositionally biased stretch (basic residues) spans lysine 7–arginine 16.

The protein belongs to the bacterial ribosomal protein bL32 family.

The polypeptide is Large ribosomal subunit protein bL32 (Buchnera aphidicola subsp. Schizaphis graminum (strain Sg)).